Consider the following 297-residue polypeptide: Acetylglutamate kinase (297 aa).

Substrate contacts are provided by residues 73-74, Arg95, and Asn188; that span reads GG.

The protein belongs to the acetylglutamate kinase family. ArgB subfamily.

The protein localises to the cytoplasm. The catalysed reaction is N-acetyl-L-glutamate + ATP = N-acetyl-L-glutamyl 5-phosphate + ADP. It participates in amino-acid biosynthesis; L-arginine biosynthesis; N(2)-acetyl-L-ornithine from L-glutamate: step 2/4. Catalyzes the ATP-dependent phosphorylation of N-acetyl-L-glutamate. The sequence is that of Acetylglutamate kinase from Nostoc sp. (strain PCC 7120 / SAG 25.82 / UTEX 2576).